Here is a 155-residue protein sequence, read N- to C-terminus: Movement protein TGB3 (155 aa).

Residues 1 to 59 lie on the Cytoplasmic side of the membrane; that stretch reads MAMPHPLECCCPQCLPSSESFPIYGEQEIPCSETQAETTPVEKTVRANVLTDILDDHYY. Residues 60–80 form a helical membrane-spanning segment; that stretch reads AILASLFIIALWLLYIYLSSI. Topologically, residues 81 to 130 are lumenal; it reads PTETGPYFYQDLNSVKIYGIGATNPEVIAAIHHWQKYPFGESPMWGGLIS. The short motif at 89-93 is the Involved in plasmodesmata targeting and virus cell-to-cell movement element; that stretch reads YQDLN. The chain crosses the membrane as a helical span at residues 131-151; it reads VLSILLKPLTLVFALSFFLLL. The tract at residues 150 to 155 is required for attachment to the host plasmodesmata-associated membrane compartments; it reads LLSSKR. The Cytoplasmic segment spans residues 152 to 155; it reads SSKR.

This sequence belongs to the virgaviridae TGB3 movement protein family. In terms of assembly, interacts with movement proteins TGB1 and TGB2. TGB1-TGB3-TGB2 complex formation is enhanced by ATP hydrolysis.

It is found in the host cell junction. It localises to the host plasmodesma. The protein resides in the host endoplasmic reticulum membrane. Its subcellular location is the host cytoplasm. The protein localises to the host cytoskeleton. Functionally, participates in the transport of viral genome to neighboring plant cells directly through plasmodesmata, without any budding. TGBp2 and TGBp3 are necessary for intracellular delivery of TGBp1-containing vRNPs to plasmodesmata. Can gate plasmodesmata and increase their size exclusion limit. Induces host actin cytoskeleton network thickening, which probably plays a major role in virus cell-to-cell movement. The protein is Movement protein TGB3 of Hordeum vulgare (Barley).